We begin with the raw amino-acid sequence, 727 residues long: 1,4-alpha-glucan branching enzyme GlgB (727 aa).

The Nucleophile role is filled by Asp-405. Residue Glu-458 is the Proton donor of the active site.

It belongs to the glycosyl hydrolase 13 family. GlgB subfamily. In terms of assembly, monomer.

The catalysed reaction is Transfers a segment of a (1-&gt;4)-alpha-D-glucan chain to a primary hydroxy group in a similar glucan chain.. Its pathway is glycan biosynthesis; glycogen biosynthesis. Functionally, catalyzes the formation of the alpha-1,6-glucosidic linkages in glycogen by scission of a 1,4-alpha-linked oligosaccharide from growing alpha-1,4-glucan chains and the subsequent attachment of the oligosaccharide to the alpha-1,6 position. This chain is 1,4-alpha-glucan branching enzyme GlgB, found in Yersinia pseudotuberculosis serotype O:1b (strain IP 31758).